The sequence spans 451 residues: Tubulin beta-1 chain (451 aa).

An MREI motif motif is present at residues 1 to 4 (MREI). Glutamine 11, glutamate 69, serine 138, glycine 142, threonine 143, and glycine 144 together coordinate GTP. Residue glutamate 69 participates in Mg(2+) binding. The residue at position 172 (serine 172) is a Phosphoserine; by CDK1. GTP is bound by residues asparagine 204 and asparagine 226. The tract at residues 430-451 (AGLEDSEEDVEEAEVEAEDKDH) is disordered. A compositionally biased stretch (acidic residues) spans 433–451 (EDSEEDVEEAEVEAEDKDH). Phosphoserine is present on serine 435. Glutamate 440 carries the post-translational modification 5-glutamyl polyglutamate.

Belongs to the tubulin family. Dimer of alpha and beta chains. A typical microtubule is a hollow water-filled tube with an outer diameter of 25 nm and an inner diameter of 15 nM. Alpha-beta heterodimers associate head-to-tail to form protofilaments running lengthwise along the microtubule wall with the beta-tubulin subunit facing the microtubule plus end conferring a structural polarity. Microtubules usually have 13 protofilaments but different protofilament numbers can be found in some organisms and specialized cells. Interacts with RANBP10. The cofactor is Mg(2+). Post-translationally, some glutamate residues at the C-terminus are polyglycylated, resulting in polyglycine chains on the gamma-carboxyl group. Glycylation is mainly limited to tubulin incorporated into axonemes (cilia and flagella) whereas glutamylation is prevalent in neuronal cells, centrioles, axonemes, and the mitotic spindle. Both modifications can coexist on the same protein on adjacent residues, and lowering polyglycylation levels increases polyglutamylation, and reciprocally. Cilia and flagella glycylation is required for their stability and maintenance. Flagella glycylation controls sperm motility. In terms of processing, some glutamate residues at the C-terminus are polyglutamylated, resulting in polyglutamate chains on the gamma-carboxyl group. Polyglutamylation plays a key role in microtubule severing by spastin (SPAST). SPAST preferentially recognizes and acts on microtubules decorated with short polyglutamate tails: severing activity by SPAST increases as the number of glutamates per tubulin rises from one to eight, but decreases beyond this glutamylation threshold. Glutamylation is also involved in cilia motility. Phosphorylated on Ser-172 by CDK1 during the cell cycle, from metaphase to telophase, but not in interphase. This phosphorylation inhibits tubulin incorporation into microtubules.

Its subcellular location is the cytoplasm. It is found in the cytoskeleton. Functionally, tubulin is the major constituent of microtubules, a cylinder consisting of laterally associated linear protofilaments composed of alpha- and beta-tubulin heterodimers. Microtubules grow by the addition of GTP-tubulin dimers to the microtubule end, where a stabilizing cap forms. Below the cap, tubulin dimers are in GDP-bound state, owing to GTPase activity of alpha-tubulin. This Mus musculus (Mouse) protein is Tubulin beta-1 chain (Tubb1).